Reading from the N-terminus, the 265-residue chain is MLIAQVIKKGWYIDFKVSSLVDIPTKYLLYTKTIGEEKYGTDAMCHIVFPLRRMEPSFIRGGYNLPTIDKRKRPNQGDGGGIRGHDIGSVWYSSIIFIRGRGGMVWGCSGTTDYMVPPVSGRRGRVYMVDAKQILKLDIDVDVNFYDPNWLLQKKLDMLHALGYQEEEAWWEYSPSGKHIHVIIVLKDPISTKELFDLQFLLGDDHKRVYFNYLRYSVMKEDAVHFNVLYTYKKSLTFSDKLKAIFRHWFKSKQYSKNLRLGQTT.

This is an uncharacterized protein from Saccharolobus islandicus (Sulfolobus islandicus).